Here is a 192-residue protein sequence, read N- to C-terminus: UPF0301 protein Bcen_0382 (192 aa).

Belongs to the UPF0301 (AlgH) family.

The sequence is that of UPF0301 protein Bcen_0382 from Burkholderia orbicola (strain AU 1054).